A 222-amino-acid polypeptide reads, in one-letter code: Octanoyltransferase (222 aa).

The BPL/LPL catalytic domain occupies 35–210 (ETTPDELWLV…EFVHLLGYPK (176 aa)). Substrate contacts are provided by residues 74 to 81 (RGGQVTYH), 141 to 143 (SLG), and 154 to 156 (GLA). Cysteine 172 functions as the Acyl-thioester intermediate in the catalytic mechanism.

It belongs to the LipB family.

It is found in the cytoplasm. The catalysed reaction is octanoyl-[ACP] + L-lysyl-[protein] = N(6)-octanoyl-L-lysyl-[protein] + holo-[ACP] + H(+). Its pathway is protein modification; protein lipoylation via endogenous pathway; protein N(6)-(lipoyl)lysine from octanoyl-[acyl-carrier-protein]: step 1/2. Catalyzes the transfer of endogenously produced octanoic acid from octanoyl-acyl-carrier-protein onto the lipoyl domains of lipoate-dependent enzymes. Lipoyl-ACP can also act as a substrate although octanoyl-ACP is likely to be the physiological substrate. This chain is Octanoyltransferase, found in Serratia proteamaculans (strain 568).